The following is a 636-amino-acid chain: Biosynthetic arginine decarboxylase (636 aa).

Lys101 carries the N6-(pyridoxal phosphate)lysine modification. Position 286-296 (286-296) interacts with substrate; the sequence is FDVGGGLAVDY.

This sequence belongs to the Orn/Lys/Arg decarboxylase class-II family. SpeA subfamily. Mg(2+) serves as cofactor. It depends on pyridoxal 5'-phosphate as a cofactor.

It catalyses the reaction L-arginine + H(+) = agmatine + CO2. Its pathway is amine and polyamine biosynthesis; agmatine biosynthesis; agmatine from L-arginine: step 1/1. Functionally, catalyzes the biosynthesis of agmatine from arginine. The sequence is that of Biosynthetic arginine decarboxylase from Shewanella frigidimarina (strain NCIMB 400).